The following is a 294-amino-acid chain: Undecaprenyl-diphosphatase (294 aa).

The next 9 membrane-spanning stretches (helical) occupy residues 2–22, 27–47, 65–85, 110–130, 135–155, 172–192, 215–235, 239–259, and 272–292; these read SMIY…SLIL, LVFS…PISS, VIAF…KIFW, LCIR…MIFY, LIFE…FLLV, ITYL…WPGF, FSFF…LYHY, IGLM…FIAL, and VSLI…YWGL.

Belongs to the UppP family.

The protein localises to the cell inner membrane. The catalysed reaction is di-trans,octa-cis-undecaprenyl diphosphate + H2O = di-trans,octa-cis-undecaprenyl phosphate + phosphate + H(+). Functionally, catalyzes the dephosphorylation of undecaprenyl diphosphate (UPP). Confers resistance to bacitracin. The sequence is that of Undecaprenyl-diphosphatase from Blochmanniella pennsylvanica (strain BPEN).